A 382-amino-acid chain; its full sequence is Myb-like transcription factor (382 aa).

3 consecutive Myb-like domains span residues 1–57 (MPRS…RWSK), 58–108 (ITGA…QHCL), and 109–160 (DPSL…ITLF). A compositionally biased stretch (acidic residues) spans 194 to 210 (MSMDASEDGDDAEDDQT). The interval 194 to 240 (MSMDASEDGDDAEDDQTPDSYTSISTSSFDDILGGSSSSPSAADTMT) is disordered. Polar residues predominate over residues 211–240 (PDSYTSISTSSFDDILGGSSSSPSAADTMT).

It localises to the nucleus. Its function is as follows. Transcription factor; part of the gene cluster that mediates the biosynthesis of 1233A, a natural compound known as an inhibitor of HMG-CoA synthase in the mevalonate pathway and with antibacterial and antifungal activities. Involved in hygromycin B-induced transcriptional control of the cluster. In Fusarium sp, this protein is Myb-like transcription factor.